Consider the following 241-residue polypeptide: Phosphoadenosine 5'-phosphosulfate reductase (241 aa).

A disordered region spans residues 221-241; that stretch reads GADPRSGRWRGKAKTECGLHA. The active-site Nucleophile; cysteine thiosulfonate intermediate is the C237.

This sequence belongs to the PAPS reductase family. CysH subfamily.

Its subcellular location is the cytoplasm. The enzyme catalyses [thioredoxin]-disulfide + sulfite + adenosine 3',5'-bisphosphate + 2 H(+) = [thioredoxin]-dithiol + 3'-phosphoadenylyl sulfate. The protein operates within sulfur metabolism; hydrogen sulfide biosynthesis; sulfite from sulfate: step 3/3. Catalyzes the formation of sulfite from phosphoadenosine 5'-phosphosulfate (PAPS) using thioredoxin as an electron donor. The polypeptide is Phosphoadenosine 5'-phosphosulfate reductase (Gloeobacter violaceus (strain ATCC 29082 / PCC 7421)).